Reading from the N-terminus, the 271-residue chain is MKI67 FHA domain-interacting nucleolar phosphoprotein (271 aa).

Residues 1–20 (MAEYSGPAKPTLALNPREDS) form a disordered region. Residue alanine 2 is modified to N-acetylalanine. Lysine 37 participates in a covalent cross-link: Glycyl lysine isopeptide (Lys-Gly) (interchain with G-Cter in SUMO2). The RRM domain occupies 44–122 (GVVYLGHLPS…RLLSCKFMPR (79 aa)). Arginine 113 bears the Omega-N-methylarginine mark. Glycyl lysine isopeptide (Lys-Gly) (interchain with G-Cter in SUMO2) cross-links involve residues lysine 178 and lysine 191. Phosphothreonine occurs at positions 213 and 217. Arginine 223 and arginine 224 each carry omega-N-methylated arginine. Residue serine 226 is modified to Phosphoserine. The disordered stretch occupies residues 242–271 (PVSPVKEDTQKTPAPESSGKKRLRKRKSKQ). A Glycyl lysine isopeptide (Lys-Gly) (interchain with G-Cter in SUMO1); alternate cross-link involves residue lysine 247. Lysine 247 is covalently cross-linked (Glycyl lysine isopeptide (Lys-Gly) (interchain with G-Cter in SUMO2); alternate). Positions 261-271 (KKRLRKRKSKQ) are enriched in basic residues.

As to quaternary structure, binds to the FHA domain of MKI67; this interaction is enhanced in mitosis. Post-translationally, phosphorylated.

Its subcellular location is the nucleus. It localises to the nucleolus. The protein resides in the chromosome. This chain is MKI67 FHA domain-interacting nucleolar phosphoprotein (Nifk), found in Rattus norvegicus (Rat).